Reading from the N-terminus, the 264-residue chain is Undecaprenyl-diphosphatase (264 aa).

8 consecutive transmembrane segments (helical) span residues 1 to 21, 39 to 59, 83 to 103, 113 to 133, 143 to 163, 181 to 201, 220 to 240, and 244 to 264; these read MDIV…FLPI, QGLA…VFYF, STLV…GLAF, SGIV…LADK, VTIK…IPGV, VGSA…AGGL, LAAL…MSII, and SMTP…FIFV.

This sequence belongs to the UppP family.

Its subcellular location is the cell inner membrane. It carries out the reaction di-trans,octa-cis-undecaprenyl diphosphate + H2O = di-trans,octa-cis-undecaprenyl phosphate + phosphate + H(+). Functionally, catalyzes the dephosphorylation of undecaprenyl diphosphate (UPP). Confers resistance to bacitracin. The chain is Undecaprenyl-diphosphatase from Campylobacter curvus (strain 525.92).